The following is a 110-amino-acid chain: Class I hydrophobin 2 (110 aa).

An N-terminal signal peptide occupies residues Met-1–Ala-19. 4 cysteine pairs are disulfide-bonded: Cys-29–Cys-89, Cys-36–Cys-83, Cys-37–Cys-70, and Cys-90–Cys-103.

Belongs to the fungal hydrophobin family. In terms of assembly, self-assembles to form functional amyloid fibrils called rodlets. Self-assembly into fibrillar rodlets occurs spontaneously at hydrophobic:hydrophilic interfaces and the rodlets further associate laterally to form amphipathic monolayers.

The protein localises to the secreted. It localises to the cell wall. Functionally, aerial growth, conidiation, and dispersal of filamentous fungi in the environment rely upon a capability of their secreting small amphipathic proteins called hydrophobins (HPBs) with low sequence identity. Class I can self-assemble into an outermost layer of rodlet bundles on aerial cell surfaces, conferring cellular hydrophobicity that supports fungal growth, development and dispersal; whereas Class II form highly ordered films at water-air interfaces through intermolecular interactions but contribute nothing to the rodlet structure. Pnh2 is a class I hydrophobin that might be involved in the attachment of the hydrophilic wall of hyphae to the hydrophobic surface of wood under inorganic phosphate (Pi)-deficient conditions and enable the mycelium to degrade efficiently the components of wood and to acquire nutrients containing Pi. The sequence is that of Class I hydrophobin 2 from Pholiota nameko.